A 439-amino-acid chain; its full sequence is uncharacterized protein (439 aa).

Residue 28–35 (GRRRIGKT) coordinates ATP.

This is an uncharacterized protein from Methanocaldococcus jannaschii (strain ATCC 43067 / DSM 2661 / JAL-1 / JCM 10045 / NBRC 100440) (Methanococcus jannaschii).